Reading from the N-terminus, the 87-residue chain is MANIKSAKKRAVQSEKRRKHNASRRSMVRTFIKKVYAAIAAGDKDTAQKAFNEMQPIVDRQSSKGLIHKNKAARHKSNLVAQINAMQ.

The tract at residues 1 to 26 is disordered; the sequence is MANIKSAKKRAVQSEKRRKHNASRRS.

The protein belongs to the bacterial ribosomal protein bS20 family.

In terms of biological role, binds directly to 16S ribosomal RNA. This Yersinia enterocolitica serotype O:8 / biotype 1B (strain NCTC 13174 / 8081) protein is Small ribosomal subunit protein bS20.